The chain runs to 490 residues: Ent-kaurenoic acid oxidase 1 (490 aa).

A helical transmembrane segment spans residues 6–26 (SWIPVWFPLMVLGCFGLNWLV). Cys439 lines the heme pocket.

The protein belongs to the cytochrome P450 family. It depends on heme as a cofactor. As to expression, widely expressed. Highly expressed in influorescence stem, influorescence, and silique tissue. Weakly expressed in cauline and rosette leaves. Expressed at a higher level in stem and influorescence than AtKAO2/CYP88A4.

The protein resides in the endoplasmic reticulum membrane. The enzyme catalyses ent-kaur-16-en-19-oate + 3 reduced [NADPH--hemoprotein reductase] + 3 O2 = gibberellin A12 + 3 oxidized [NADPH--hemoprotein reductase] + 4 H2O + 4 H(+). It carries out the reaction ent-kaur-16-en-19-oate + reduced [NADPH--hemoprotein reductase] + O2 = ent-7alpha-hydroxykaur-16-en-19-oate + oxidized [NADPH--hemoprotein reductase] + H2O + H(+). The catalysed reaction is ent-7alpha-hydroxykaur-16-en-19-oate + reduced [NADPH--hemoprotein reductase] + O2 = gibberellin A12 aldehyde + oxidized [NADPH--hemoprotein reductase] + 2 H2O + H(+). It catalyses the reaction gibberellin A12 aldehyde + reduced [NADPH--hemoprotein reductase] + O2 = gibberellin A12 + oxidized [NADPH--hemoprotein reductase] + H2O + 2 H(+). It functions in the pathway plant hormone biosynthesis; gibberellin biosynthesis. Its function is as follows. Catalyzes three successive oxidations of ent-kaurenoic acid giving gibberellin 12 (GA12), a key step in gibberellins (GAs) biosynthesis. GAs, which are involved many processes, including stem elongation, play a central role in plant development. The protein is Ent-kaurenoic acid oxidase 1 of Arabidopsis thaliana (Mouse-ear cress).